The sequence spans 146 residues: Large ribosomal subunit protein uL13 (146 aa).

It belongs to the universal ribosomal protein uL13 family. As to quaternary structure, part of the 50S ribosomal subunit.

This protein is one of the early assembly proteins of the 50S ribosomal subunit, although it is not seen to bind rRNA by itself. It is important during the early stages of 50S assembly. This chain is Large ribosomal subunit protein uL13, found in Sulfurisphaera tokodaii (strain DSM 16993 / JCM 10545 / NBRC 100140 / 7) (Sulfolobus tokodaii).